We begin with the raw amino-acid sequence, 365 residues long: UDP-N-acetylglucosamine--N-acetylmuramyl-(pentapeptide) pyrophosphoryl-undecaprenol N-acetylglucosamine transferase (365 aa).

UDP-N-acetyl-alpha-D-glucosamine contacts are provided by residues 17–19, Asn129, Arg167, Ser194, Ile250, 269–274, and Gln295; these read TGG and ALTVSE.

It belongs to the glycosyltransferase 28 family. MurG subfamily.

The protein resides in the cell inner membrane. The enzyme catalyses di-trans,octa-cis-undecaprenyl diphospho-N-acetyl-alpha-D-muramoyl-L-alanyl-D-glutamyl-meso-2,6-diaminopimeloyl-D-alanyl-D-alanine + UDP-N-acetyl-alpha-D-glucosamine = di-trans,octa-cis-undecaprenyl diphospho-[N-acetyl-alpha-D-glucosaminyl-(1-&gt;4)]-N-acetyl-alpha-D-muramoyl-L-alanyl-D-glutamyl-meso-2,6-diaminopimeloyl-D-alanyl-D-alanine + UDP + H(+). Its pathway is cell wall biogenesis; peptidoglycan biosynthesis. Cell wall formation. Catalyzes the transfer of a GlcNAc subunit on undecaprenyl-pyrophosphoryl-MurNAc-pentapeptide (lipid intermediate I) to form undecaprenyl-pyrophosphoryl-MurNAc-(pentapeptide)GlcNAc (lipid intermediate II). The protein is UDP-N-acetylglucosamine--N-acetylmuramyl-(pentapeptide) pyrophosphoryl-undecaprenol N-acetylglucosamine transferase of Shewanella woodyi (strain ATCC 51908 / MS32).